The following is a 203-amino-acid chain: uncharacterized protein (203 aa).

This is an uncharacterized protein from Chlorobium limicola.